The following is a 351-amino-acid chain: Adenine deaminase (351 aa).

The Zn(2+) site is built by H20, H22, and H200. The active-site Proton donor is the E203. D281 lines the Zn(2+) pocket. D282 is a substrate binding site.

It belongs to the metallo-dependent hydrolases superfamily. Adenosine and AMP deaminases family. Adenine deaminase type 2 subfamily. Zn(2+) is required as a cofactor.

The catalysed reaction is adenine + H2O + H(+) = hypoxanthine + NH4(+). In terms of biological role, catalyzes the hydrolytic deamination of adenine to hypoxanthine. Plays an important role in the purine salvage pathway and in nitrogen catabolism. This chain is Adenine deaminase, found in Cupriavidus necator (strain ATCC 17699 / DSM 428 / KCTC 22496 / NCIMB 10442 / H16 / Stanier 337) (Ralstonia eutropha).